The chain runs to 231 residues: Cytidylate kinase (231 aa).

17–25 (GPTASGKGT) contacts ATP.

Belongs to the cytidylate kinase family. Type 1 subfamily.

Its subcellular location is the cytoplasm. The enzyme catalyses CMP + ATP = CDP + ADP. It carries out the reaction dCMP + ATP = dCDP + ADP. The chain is Cytidylate kinase from Ralstonia pickettii (strain 12J).